A 69-amino-acid polypeptide reads, in one-letter code: Putative membrane protein insertion efficiency factor (69 aa).

This sequence belongs to the UPF0161 family.

It is found in the cell membrane. In terms of biological role, could be involved in insertion of integral membrane proteins into the membrane. This Caldanaerobacter subterraneus subsp. tengcongensis (strain DSM 15242 / JCM 11007 / NBRC 100824 / MB4) (Thermoanaerobacter tengcongensis) protein is Putative membrane protein insertion efficiency factor.